A 447-amino-acid polypeptide reads, in one-letter code: Alkylglycerol monooxygenase (447 aa).

2 helical membrane-spanning segments follow: residues 43 to 63 and 111 to 131; these read ATPF…ILKG and WDST…YYWF. Positions 119–249 constitute a Fatty acid hydroxylase domain; it reads FTFLGVDFGY…LIIWDRIFGT (131 aa). Positions 132–136 match the Histidine box-1 motif; it reads HRMAH. The short motif at 145 to 149 is the Histidine box-2 element; the sequence is HQAHH. Residues 170–190 form a helical membrane-spanning segment; sequence SWVFYCPLALFIPPSVFAVHI. The Histidine box-3 signature appears at 221-225; sequence HRVHH. Transmembrane regions (helical) follow at residues 340–360, 363–383, and 413–433; these read VLQF…TAVL, VTLL…GFLL, and IPSL…FWGV.

The protein belongs to the sterol desaturase family. TMEM195 subfamily. Requires Fe cation as cofactor. In terms of tissue distribution, highly expressed in lever and small intestine.

Its subcellular location is the endoplasmic reticulum membrane. The catalysed reaction is 1-O-(1,2-saturated-alkyl)-sn-glycerol + (6R)-L-erythro-5,6,7,8-tetrahydrobiopterin + O2 = a 1-(1-hydroxyalkyl)-sn-glycerol + (6R)-L-erythro-6,7-dihydrobiopterin + H2O. In terms of biological role, glyceryl-ether monooxygenase that cleaves the O-alkyl bond of ether lipids. Ether lipids are essential components of brain membranes. The sequence is that of Alkylglycerol monooxygenase (Agmo) from Mus musculus (Mouse).